A 609-amino-acid chain; its full sequence is mRNA-decapping enzyme 1B (609 aa).

A2 is modified (N-acetylalanine). S147 carries the post-translational modification Phosphoserine. A Phosphotyrosine modification is found at Y191. 2 disordered regions span residues 201-222 (PVKPSENQQQRIPQPNQTLDPE) and 243-264 (TVEPPQTLHQQQQQQQEKLPIR). A compositionally biased stretch (polar residues) spans 205–219 (SENQQQRIPQPNQTL). 2 positions are modified to phosphoserine: S272 and S333. Disordered regions lie at residues 326–345 (TGPVRPGSPHNIGTSRGVQN) and 359–438 (TPGA…SSGV). Residues 336–345 (NIGTSRGVQN) are compositionally biased toward polar residues. The span at 368-378 (PSTPAPASSAA) shows a compositional bias: low complexity. Phosphothreonine is present on T389. Polar residues predominate over residues 418–438 (QSTLPRQTLPISGNQTGSSGV). Phosphoserine is present on residues S440 and S503.

This sequence belongs to the DCP1 family. Interacts with DCP1A.

The protein resides in the cytoplasm. It is found in the nucleus. The enzyme catalyses a 5'-end (N(7)-methyl 5'-triphosphoguanosine)-ribonucleoside in mRNA + H2O = N(7)-methyl-GDP + a 5'-end phospho-ribonucleoside in mRNA + 2 H(+). Functionally, may play a role in the degradation of mRNAs, both in normal mRNA turnover and in nonsense-mediated mRNA decay. May remove the 7-methyl guanine cap structure from mRNA molecules, yielding a 5'-phosphorylated mRNA fragment and 7m-GDP. This is mRNA-decapping enzyme 1B (DCP1B) from Pongo abelii (Sumatran orangutan).